We begin with the raw amino-acid sequence, 197 residues long: dITP/XTP pyrophosphatase (197 aa).

7–12 (TGNEQK) serves as a coordination point for substrate. Mg(2+)-binding residues include Glu44 and Asp73. Residue Asp73 is the Proton acceptor of the active site. Substrate is bound by residues Thr74, 156–159 (FGYD), Lys179, and 184–185 (HR).

It belongs to the HAM1 NTPase family. As to quaternary structure, homodimer. Requires Mg(2+) as cofactor.

It catalyses the reaction XTP + H2O = XMP + diphosphate + H(+). It carries out the reaction dITP + H2O = dIMP + diphosphate + H(+). The catalysed reaction is ITP + H2O = IMP + diphosphate + H(+). Functionally, pyrophosphatase that catalyzes the hydrolysis of nucleoside triphosphates to their monophosphate derivatives, with a high preference for the non-canonical purine nucleotides XTP (xanthosine triphosphate), dITP (deoxyinosine triphosphate) and ITP. Seems to function as a house-cleaning enzyme that removes non-canonical purine nucleotides from the nucleotide pool, thus preventing their incorporation into DNA/RNA and avoiding chromosomal lesions. The sequence is that of dITP/XTP pyrophosphatase from Elusimicrobium minutum (strain Pei191).